The sequence spans 70 residues: Large ribosomal subunit protein uL29 (70 aa).

The protein belongs to the universal ribosomal protein uL29 family.

The protein is Large ribosomal subunit protein uL29 of Prochlorococcus marinus (strain MIT 9313).